Here is a 122-residue protein sequence, read N- to C-terminus: Large ribosomal subunit protein uL18 (122 aa).

It belongs to the universal ribosomal protein uL18 family. As to quaternary structure, part of the 50S ribosomal subunit; part of the 5S rRNA/L5/L18/L25 subcomplex. Contacts the 5S and 23S rRNAs.

In terms of biological role, this is one of the proteins that bind and probably mediate the attachment of the 5S RNA into the large ribosomal subunit, where it forms part of the central protuberance. This Trichlorobacter lovleyi (strain ATCC BAA-1151 / DSM 17278 / SZ) (Geobacter lovleyi) protein is Large ribosomal subunit protein uL18.